A 510-amino-acid chain; its full sequence is Flagellin A (510 aa).

This sequence belongs to the bacterial flagellin family. In terms of assembly, heteromer of FlaA and FlaB. FlaB is located proximal to the hook while the remainder of the filament is composed of the predominant FlaA.

The protein localises to the secreted. The protein resides in the bacterial flagellum. In terms of biological role, flagellin is the subunit protein which polymerizes to form the filaments of bacterial flagella. Important for motility and virulence. This Helicobacter pylori (strain ATCC 700392 / 26695) (Campylobacter pylori) protein is Flagellin A (flaA).